Consider the following 299-residue polypeptide: Protease HtpX homolog (299 aa).

2 consecutive transmembrane segments (helical) span residues 14 to 34 and 39 to 59; these read WLLLLVFFLLLGLVGYGVGNL and GFGGLILALVIGFIYVVTMIF. H143 lines the Zn(2+) pocket. The active site involves E144. Residue H147 coordinates Zn(2+). A run of 2 helical transmembrane segments spans residues 153–173 and 198–218; these read IRISTIAVALASAITMLAGMA and IVFLILSLIAIILAPLAATLV. E227 contacts Zn(2+).

It belongs to the peptidase M48B family. It depends on Zn(2+) as a cofactor.

The protein localises to the cell membrane. In Streptococcus thermophilus (strain ATCC BAA-250 / LMG 18311), this protein is Protease HtpX homolog.